The chain runs to 272 residues: Putative hydro-lyase AZC_4080 (272 aa).

It belongs to the D-glutamate cyclase family.

The chain is Putative hydro-lyase AZC_4080 from Azorhizobium caulinodans (strain ATCC 43989 / DSM 5975 / JCM 20966 / LMG 6465 / NBRC 14845 / NCIMB 13405 / ORS 571).